The primary structure comprises 215 residues: Transcription elongation factor A protein-like 4 (215 aa).

N-acetylmethionine is present on M1. The disordered stretch occupies residues 1–133 (MEKLYSENEG…RKAKRKTNKG (133 aa)). A phosphoserine mark is found at S6, S88, and S102. A compositionally biased stretch (basic and acidic residues) spans 25-102 (QDERKPEVTC…KPEIEGKPES (78 aa)).

It belongs to the TFS-II family. TFA subfamily.

The protein resides in the nucleus. Its function is as follows. May be involved in transcriptional regulation. The sequence is that of Transcription elongation factor A protein-like 4 (TCEAL4) from Homo sapiens (Human).